The chain runs to 262 residues: uncharacterized protein (262 aa).

Residues 1–211 enclose the Radical SAM core domain; it reads MAFHVMIIPS…LLYLLDSYLE (211 aa). The [4Fe-4S] cluster site is built by Cys-13, Cys-17, and Cys-20.

It belongs to the radical SAM superfamily. Anaerobic sulfatase-maturating enzyme family. Requires [4Fe-4S] cluster as cofactor.

This is an uncharacterized protein from Methanothermobacter thermautotrophicus (strain ATCC 29096 / DSM 1053 / JCM 10044 / NBRC 100330 / Delta H) (Methanobacterium thermoautotrophicum).